Reading from the N-terminus, the 439-residue chain is Tol-Pal system protein TolB (439 aa).

An N-terminal signal peptide occupies residues 1-22 (MTKFPRWLAILVGLLFPLSALT).

It belongs to the TolB family. In terms of assembly, the Tol-Pal system is composed of five core proteins: the inner membrane proteins TolA, TolQ and TolR, the periplasmic protein TolB and the outer membrane protein Pal. They form a network linking the inner and outer membranes and the peptidoglycan layer.

The protein localises to the periplasm. Its function is as follows. Part of the Tol-Pal system, which plays a role in outer membrane invagination during cell division and is important for maintaining outer membrane integrity. The protein is Tol-Pal system protein TolB of Xylella fastidiosa (strain M12).